Reading from the N-terminus, the 270-residue chain is 4-hydroxy-tetrahydrodipicolinate reductase (270 aa).

7 to 12 (GVSGRM) lines the NAD(+) pocket. Arg34 is an NADP(+) binding site. Residues 97–99 (GTT) and 121–124 (SGNM) contribute to the NAD(+) site. The active-site Proton donor/acceptor is His155. His156 is a (S)-2,3,4,5-tetrahydrodipicolinate binding site. Lys159 (proton donor) is an active-site residue. Residue 165–166 (GT) coordinates (S)-2,3,4,5-tetrahydrodipicolinate.

Belongs to the DapB family.

Its subcellular location is the cytoplasm. The catalysed reaction is (S)-2,3,4,5-tetrahydrodipicolinate + NAD(+) + H2O = (2S,4S)-4-hydroxy-2,3,4,5-tetrahydrodipicolinate + NADH + H(+). The enzyme catalyses (S)-2,3,4,5-tetrahydrodipicolinate + NADP(+) + H2O = (2S,4S)-4-hydroxy-2,3,4,5-tetrahydrodipicolinate + NADPH + H(+). The protein operates within amino-acid biosynthesis; L-lysine biosynthesis via DAP pathway; (S)-tetrahydrodipicolinate from L-aspartate: step 4/4. Catalyzes the conversion of 4-hydroxy-tetrahydrodipicolinate (HTPA) to tetrahydrodipicolinate. The polypeptide is 4-hydroxy-tetrahydrodipicolinate reductase (Allorhizobium ampelinum (strain ATCC BAA-846 / DSM 112012 / S4) (Agrobacterium vitis (strain S4))).